We begin with the raw amino-acid sequence, 338 residues long: MKKVRKSFVLLLTGLLAVLILSACGQKTQQDIVAGLDEKAKEYTSYKAKAKMTIETGSEPQVYNVEIWHKKPSLYRVYLENPKKDQNQVILRNENGVFVLTPSLNKSFRFQSDWPNNSSQVYLFESLVKDVQNDSDAVFTAKEKKYVFETKTNYQHNKMLPTQEITFNKKDMSPSSVKVMDTDRKVMVKVEFSSFEFNKQFDKESFDEKKNMTLSQMDVATSAKPSDTFAVKTPLELPLGVKLLEEKDISTEDGKRIIMTYGGEKSFTLIQEKAQIAKASSSVTLNGEPVNLGYTIGALSDASLSWTYDGVDYLLSSKDLSKEEMVTVAKSMQGQSSK.

A helical membrane pass occupies residues 8-25; that stretch reads FVLLLTGLLAVLILSACG.

It localises to the cell membrane. Its function is as follows. required for efficient sporulation. The sequence is that of Sporulation protein YdcC (ydcC) from Bacillus subtilis (strain 168).